The sequence spans 493 residues: MPDVTGDLAPLTPGARVLVTGAGITGRAVLGALAPLEVAATLCDDNADALAALAAKGVAVIAPGDAIASIGDYALVVTSPGFAPSAPVLAAAAAAGVPIWGDVELAWRLDAAGRYGPPRRWLVVTGTNGKTTTTSMLHDMLVAGGRRSVLCGNIGDPVLAVLDQPAELLAVELSSFQLHWAPSLRPEAGVVLNVAEDHLDWHGSMAAYARDKARVLDGRVAVVGLDDPVAAGLLPTAAATVRVGFRLGDPAAGELGVRDGKLIDRAFDDGVELADCADIGVAGPIGVLDALGAAALARAVGVAPGAIGAALASFQVGRHRAEVVGTVDGVVFIDDSKATNPHAAQASITAYDRVVWVAGGLLKGASVDELVRQVANRLAGAVLIGRDRQMVADALSRHAPDVPVVELVAGEDSGVLGTNESIESVGDHVTRVIEVGGRPVSDAVMSAVVSAARDLASPGDTVLLAPAGASFDQFSGYGQRGDAFAAAVRAAVG.

126–132 (GTNGKTT) is a binding site for ATP.

The protein belongs to the MurCDEF family.

It is found in the cytoplasm. The catalysed reaction is UDP-N-acetyl-alpha-D-muramoyl-L-alanine + D-glutamate + ATP = UDP-N-acetyl-alpha-D-muramoyl-L-alanyl-D-glutamate + ADP + phosphate + H(+). It participates in cell wall biogenesis; peptidoglycan biosynthesis. In terms of biological role, cell wall formation. Catalyzes the addition of glutamate to the nucleotide precursor UDP-N-acetylmuramoyl-L-alanine (UMA). The polypeptide is UDP-N-acetylmuramoylalanine--D-glutamate ligase (Mycolicibacterium smegmatis (strain ATCC 700084 / mc(2)155) (Mycobacterium smegmatis)).